Consider the following 255-residue polypeptide: GTP cyclohydrolase FolE2 (255 aa).

The protein belongs to the GTP cyclohydrolase IV family.

It carries out the reaction GTP + H2O = 7,8-dihydroneopterin 3'-triphosphate + formate + H(+). The protein operates within cofactor biosynthesis; 7,8-dihydroneopterin triphosphate biosynthesis; 7,8-dihydroneopterin triphosphate from GTP: step 1/1. Functionally, converts GTP to 7,8-dihydroneopterin triphosphate. This chain is GTP cyclohydrolase FolE2, found in Syntrophus aciditrophicus (strain SB).